The sequence spans 338 residues: UPF0284 protein PAE0372 (338 aa).

This sequence belongs to the UPF0284 family.

The chain is UPF0284 protein PAE0372 from Pyrobaculum aerophilum (strain ATCC 51768 / DSM 7523 / JCM 9630 / CIP 104966 / NBRC 100827 / IM2).